Consider the following 361-residue polypeptide: Phosphoserine aminotransferase (361 aa).

Position 43 (arginine 43) interacts with L-glutamate. Pyridoxal 5'-phosphate contacts are provided by residues 77-78 (AS), tryptophan 103, threonine 153, aspartate 173, and glutamine 196. Position 197 is an N6-(pyridoxal phosphate)lysine (lysine 197). A pyridoxal 5'-phosphate-binding site is contributed by 238–239 (NT).

It belongs to the class-V pyridoxal-phosphate-dependent aminotransferase family. SerC subfamily. Homodimer. Pyridoxal 5'-phosphate is required as a cofactor.

It is found in the cytoplasm. It catalyses the reaction O-phospho-L-serine + 2-oxoglutarate = 3-phosphooxypyruvate + L-glutamate. The catalysed reaction is 4-(phosphooxy)-L-threonine + 2-oxoglutarate = (R)-3-hydroxy-2-oxo-4-phosphooxybutanoate + L-glutamate. Its pathway is amino-acid biosynthesis; L-serine biosynthesis; L-serine from 3-phospho-D-glycerate: step 2/3. It functions in the pathway cofactor biosynthesis; pyridoxine 5'-phosphate biosynthesis; pyridoxine 5'-phosphate from D-erythrose 4-phosphate: step 3/5. Catalyzes the reversible conversion of 3-phosphohydroxypyruvate to phosphoserine and of 3-hydroxy-2-oxo-4-phosphonooxybutanoate to phosphohydroxythreonine. The polypeptide is Phosphoserine aminotransferase (Pseudomonas aeruginosa (strain LESB58)).